Here is a 141-residue protein sequence, read N- to C-terminus: Auxin-responsive protein SAUR64 (141 aa).

This sequence belongs to the ARG7 family.

Its subcellular location is the cell membrane. May promote auxin-stimulated organ elongation, such as hypocotyls, stamen filaments and petals. The polypeptide is Auxin-responsive protein SAUR64 (Arabidopsis thaliana (Mouse-ear cress)).